We begin with the raw amino-acid sequence, 585 residues long: T-cell surface protein tactile (585 aa).

Positions 1 to 21 are cleaved as a signal peptide; sequence MEKKWKYCAVYYIIQIHFVKG. At 22 to 519 the chain is on the extracellular side; the sequence is VWEKTVNTEE…IVVNKPKDGM (498 aa). Residues 38–125 enclose the Ig-like V-type 1 domain; it reads GSDVNLTCQT…YECMLVLYPE (88 aa). N-linked (GlcNAc...) asparagine glycans are attached at residues Asn-42, Asn-97, Asn-107, Asn-148, Asn-156, Asn-166, Asn-200, Asn-215, Asn-277, Asn-278, Asn-300, Asn-350, and Asn-368. Cysteines 45 and 118 form a disulfide. One can recognise an Ig-like V-type 2 domain in the interval 156–238; the sequence is NQTLEIPCFQ…YRLHLSPVQI (83 aa). An intrachain disulfide couples Cys-163 to Cys-247. One can recognise an Ig-like C2-type domain in the interval 269 to 375; sequence PEIPVIVENN…VWNISSEKIT (107 aa). A disulfide bond links Cys-290 and Cys-355. 3 stretches are compositionally biased toward polar residues: residues 385 to 418, 426 to 452, and 460 to 475; these read TDPP…SSVT, RPNT…SSGT, and RIPS…GAGS. The tract at residues 385–475 is disordered; it reads TDPPLSVTES…YSSSPSGAGS (91 aa). N-linked (GlcNAc...) asparagine glycosylation is present at Asn-435. N-linked (GlcNAc...) asparagine glycosylation is present at Asn-497. The helical transmembrane segment at 520-540 threads the bilayer; sequence SWPVIVAALLFCCMILFGLGV. Residues 541-585 are Cytoplasmic-facing; the sequence is RKWCQYQKEIMERPPPFKPPPPPIKYTCIQEPNESDLPYHEMETL.

As to quaternary structure, homodimer; disulfide-linked. Interacts with PVR. In terms of tissue distribution, expressed on normal T-cell lines and clones, and some transformed T-cells, but no other cultured cell lines tested. It is expressed at very low levels on activated B-cells.

The protein localises to the membrane. Its function is as follows. May be involved in adhesive interactions of activated T and NK cells during the late phase of the immune response. Promotes NK cell-target adhesion by interacting with PVR present on target cells. May function at a time after T and NK cells have penetrated the endothelium using integrins and selectins, when they are actively engaging diseased cells and moving within areas of inflammation. The protein is T-cell surface protein tactile (CD96) of Homo sapiens (Human).